The following is a 320-amino-acid chain: Cytochrome f (320 aa).

A signal peptide spans 1 to 35 (MQTRNAFSWLKKQITRSISVSLMIYILTRTSISSA). The heme site is built by Y36, C56, C59, and H60. A helical transmembrane segment spans residues 286–306 (VQGLLFFLASVILAQIFLVLK).

It belongs to the cytochrome f family. As to quaternary structure, the 4 large subunits of the cytochrome b6-f complex are cytochrome b6, subunit IV (17 kDa polypeptide, petD), cytochrome f and the Rieske protein, while the 4 small subunits are PetG, PetL, PetM and PetN. The complex functions as a dimer. It depends on heme as a cofactor.

The protein resides in the plastid. It is found in the chloroplast thylakoid membrane. Component of the cytochrome b6-f complex, which mediates electron transfer between photosystem II (PSII) and photosystem I (PSI), cyclic electron flow around PSI, and state transitions. The sequence is that of Cytochrome f from Nicotiana sylvestris (Wood tobacco).